A 46-amino-acid polypeptide reads, in one-letter code: uncharacterized protein (46 aa).

Positions 1–46 (MNFGIKPDVSSGPRKGGPFKELSDFSKTSPTPQQPRSLSGKSVMLP) are disordered. Over residues 25–40 (FSKTSPTPQQPRSLSG) the composition is skewed to polar residues.

This is an uncharacterized protein from Dictyostelium discoideum (Social amoeba).